A 532-amino-acid polypeptide reads, in one-letter code: Chromobox protein homolog 2 (532 aa).

The segment at 1–66 is involved in the interaction with H3C15 and H3C1; that stretch reads MEELSSVGEQ…AFQKKEHEKE (66 aa). A Chromo domain is found at 12–70; that stretch reads FAAECILSKRLRKGKLEYLVKWRGWSSKHNSWEPEENILDPRLLLAFQKKEHEKEVQNR. Positions 60–69 are enriched in basic and acidic residues; it reads KKEHEKEVQN. Residues 60 to 204 are disordered; the sequence is KKEHEKEVQN…APASKLPPPL (145 aa). The span at 70 to 82 shows a compositional bias: basic residues; that stretch reads RKRGKRPRGRPRK. Residues 75-87 constitute a DNA-binding region (a.T hook); sequence RPRGRPRKLTAMS. Residues 103-119 are compositionally biased toward low complexity; that stretch reads KSKSSSSSSSSTSSSSS. A compositionally biased stretch (basic and acidic residues) spans 128–140; it reads LDAKRGPRGRETH. Residues Lys-146 and Lys-153 each participate in a glycyl lysine isopeptide (Lys-Gly) (interchain with G-Cter in SUMO2) cross-link. Positions 163-168 match the Nuclear localization signal motif; that stretch reads KRGRKP. Asymmetric dimethylarginine; alternate is present on Arg-247. At Arg-247 the chain carries Omega-N-methylarginine; alternate. Disordered stretches follow at residues 296–348 and 379–493; these read KGEL…PAPT and KGVP…SQDW. A Phosphoserine modification is found at Ser-302. Residues 464 to 478 are compositionally biased toward low complexity; sequence SSSSDSDPDSASPPS. Polar residues predominate over residues 479–493; sequence TGQNPSVSVQTSQDW.

Component of a PRC1-like complex. The composition of the PRC1 complex may differ between the PRC1 complex in pluripotent embryonic stem cells containing RNF2, CBX7 and PCGF2, and the PRC1 complex in differentiating cells containing RNF2, CBX2, CBX4 and BMI1. May interact with H3C15, H3C1 and RNF2. Interacts (via chromodomain) with histone H3K9Me3 and H3K27me3.

The protein resides in the nucleus. It localises to the chromosome. Functionally, component of a Polycomb group (PcG) multiprotein PRC1-like complex, a complex class required to maintain the transcriptionally repressive state of many genes, including Hox genes, throughout development. PcG PRC1 complex acts via chromatin remodeling and modification of histones; it mediates monoubiquitination of histone H2A 'Lys-119', rendering chromatin heritably changed in its expressibility. Binds to histone H3 trimethylated at 'Lys-9' (H3K9me3) or at 'Lys-27' (H3K27me3). Plays a role in the lineage differentiation of the germ layers in embryonic development. Involved in sexual development, acting as activator of NR5A1 expression. This is Chromobox protein homolog 2 (CBX2) from Homo sapiens (Human).